The following is a 39-amino-acid chain: Photosystem II reaction center protein L (39 aa).

The helical transmembrane segment at 18–38 (SLYLGLLLVFVMGILFSSYFF) threads the bilayer.

It belongs to the PsbL family. In terms of assembly, PSII is composed of 1 copy each of membrane proteins PsbA, PsbB, PsbC, PsbD, PsbE, PsbF, PsbH, PsbI, PsbJ, PsbK, PsbL, PsbM, PsbT, PsbX, PsbY, Psb30/Ycf12, peripheral proteins PsbO, CyanoQ (PsbQ), PsbU, PsbV and a large number of cofactors. It forms dimeric complexes.

It is found in the cellular thylakoid membrane. In terms of biological role, one of the components of the core complex of photosystem II (PSII). PSII is a light-driven water:plastoquinone oxidoreductase that uses light energy to abstract electrons from H(2)O, generating O(2) and a proton gradient subsequently used for ATP formation. It consists of a core antenna complex that captures photons, and an electron transfer chain that converts photonic excitation into a charge separation. This subunit is found at the monomer-monomer interface and is required for correct PSII assembly and/or dimerization. The sequence is that of Photosystem II reaction center protein L from Prochlorococcus marinus (strain NATL2A).